We begin with the raw amino-acid sequence, 336 residues long: DNA-directed RNA polymerase subunit alpha (336 aa).

The interval 1–233 (MSSNSFLTPR…EQFSFFADLE (233 aa)) is alpha N-terminal domain (alpha-NTD). The segment at 247 to 336 (IDPILLRPVD…YIKEPGHASS (90 aa)) is alpha C-terminal domain (alpha-CTD).

The protein belongs to the RNA polymerase alpha chain family. Homodimer. The RNAP catalytic core consists of 2 alpha, 1 beta, 1 beta' and 1 omega subunit. When a sigma factor is associated with the core the holoenzyme is formed, which can initiate transcription.

The catalysed reaction is RNA(n) + a ribonucleoside 5'-triphosphate = RNA(n+1) + diphosphate. Functionally, DNA-dependent RNA polymerase catalyzes the transcription of DNA into RNA using the four ribonucleoside triphosphates as substrates. The sequence is that of DNA-directed RNA polymerase subunit alpha from Nitrosomonas europaea (strain ATCC 19718 / CIP 103999 / KCTC 2705 / NBRC 14298).